The following is an 8797-amino-acid chain: Nesprin-1 (8797 aa).

An actin-binding region spans residues 1–289; that stretch reads MATSRGASRC…KHYPDIHNAS (289 aa). Topologically, residues 1–8746 are cytoplasmic; that stretch reads MATSRGASRC…GRGFLFRVLR (8746 aa). Calponin-homology (CH) domains follow at residues 27–134 and 178–283; these read IVQK…LYFQ and GNAK…KHYP. Spectrin repeat units follow at residues 314 to 397, 398 to 502, 503 to 609, 610 to 703, 704 to 815, 816 to 923, 924 to 1024, 1025 to 1122, 1123 to 1246, 1247 to 1335, 1336 to 1444, 1445 to 1550, 1551 to 1653, 1654 to 1763, 1764 to 1879, 1880 to 1976, 1977 to 2081, 2082 to 2195, 2196 to 2303, 2304 to 2401, 2402 to 2513, 2514 to 2619, 2620 to 2731, 2732 to 2838, 2839 to 2962, 2963 to 3062, 3063 to 3171, 3172 to 3275, 3276 to 3387, 3388 to 3490, 3491 to 3593, 3594 to 3720, 3721 to 3814, 3815 to 3920, 3921 to 4028, 4029 to 4139, 4140 to 4235, 4236 to 4339, 4340 to 4451, 4452 to 4560, 4561 to 4669, 4670 to 4776, 4777 to 4882, 4883 to 4991, 4992 to 5099, 5100 to 5209, 5210 to 5318, 5319 to 5424, 5425 to 5522, 5523 to 5630, 5631 to 5736, and 5737 to 5842; these read REDR…SRLF, DWHI…HLMK, MEFL…SMLE, EVIS…YAQA, DEMD…QLLI, PLEE…KHVE, TNSR…HLKI, DVEK…LMED, PDKW…NSLE, ELIS…ERRI, QVTL…MEMV, KTKW…ILGH, LSQQ…LENL, LAHW…LQSV, VAEH…SHAS, LSGI…ADAL, AVLK…QGQC, CGLI…LRVS, LSIW…KDFT, AQST…KTQA, SLQE…LQDC, ASEL…LRSC, QVAL…LESV, ISQW…VEEI, VKDH…SGQV, AQLE…QNKE, QILQ…LENL, KIQM…VSRL, DRIV…LEGA, LSKW…SEKL, VRLH…RTQF, NNVV…YSDW, YGST…LEKG, LHLA…LEAK, VKDH…QRMY, QSLE…KHLK, SELW…REED, LQRT…IQVS, VTNL…LNKA, LSEK…LEKN, LVSR…VQEA, ILAR…LEDT, TSAY…CESR, MVQS…LTEI, YSQC…LQRC, TAQW…LEDA, VDEW…GKLV, KQEL…EQSK, ATSQ…LSKL, NQAA…LQDA, AKDM…MQEA, and VVQY…PSAH. The stretch at 314–8666 forms a coiled coil; that stretch reads REDRVIFKEM…EKLLDVSSSQ (8353 aa). Ser-732 carries the phosphoserine modification. Thr-2270 carries the phosphothreonine modification. At Ser-5657 the chain carries Phosphoserine. The disordered stretch occupies residues 5859–5886; it reads PVTEESGEEGTNSEISSPPACRSPSPVA. 19 Spectrin repeats span residues 5962-6071, 6072-6178, 6374-6485, 6486-6581, 6582-6691, 6692-6795, 6796-6902, 6903-7020, 7021-7128, 7129-7237, 7238-7350, 7351-7454, 7455-7558, 7559-7671, 7672-7783, 7784-7883, 7884-7997, 7998-8106, and 8107-8216; these read LERQ…LEEK, LNDQ…SLLE, RQSI…RLQQ, ILNF…RSGL, NQNL…LETW, SHLD…TILK, HWTR…QEKL, HQLQ…LEGL, LESW…LKSV, LDQW…SKAL, LQLW…LQAG, VLDY…LQSF, LLQH…RGII, DSQI…LAFL, LKDW…NEWA, VFSE…LKET, LVAV…IEET, WRLW…LKHF, and IGQR…LPLP. A Phosphoserine modification is found at Ser-8223. The tract at residues 8246 to 8279 is disordered; it reads DSLLSPQPSSNLSLSLAQPLRSERSGRDTPASVD. The span at 8247–8265 shows a compositional bias: low complexity; that stretch reads SLLSPQPSSNLSLSLAQPL. The residue at position 8274 (Thr-8274) is a Phosphothreonine. Ser-8277, Ser-8280, and Ser-8305 each carry phosphoserine. Spectrin repeat units follow at residues 8329–8438, 8439–8548, and 8549–8666; these read SALE…MKQN, LQKW…LQDA, and LMQC…SSSQ. Thr-8360 is subject to Phosphothreonine. The tract at residues 8671 to 8734 is disordered; that stretch reads SWSSADELDT…DSSLSEPGPG (64 aa). Polar residues-rich tracts occupy residues 8680–8696 and 8704–8729; these read TSGSVSPTSGRSTPNRQ and SLSQPGPSVSSPHSRSTKGGSDSSLS. Positions 8738 to 8797 constitute a KASH domain; that stretch reads RGFLFRVLRAALPLQLLLLLLIGLACLVPMSEEDYSCALSNNFARSFHPMLRYTNGPPPL. The chain crosses the membrane as a helical; Anchor for type IV membrane protein span at residues 8747-8767; it reads AALPLQLLLLLLIGLACLVPM. The Perinuclear space portion of the chain corresponds to 8768 to 8797; sequence SEEDYSCALSNNFARSFHPMLRYTNGPPPL.

It belongs to the nesprin family. In terms of assembly, core component of LINC complexes which are composed of inner nuclear membrane SUN domain-containing proteins coupled to outer nuclear membrane KASH domain-containing nesprins. SUN and KASH domain-containing proteins seem to bind each other promiscuously; however, differentially expression of LINC complex constituents can give rise to specific assemblies. At least SUN1/2-containing core LINC complexes are proposed to be hexameric composed of three protomers of each KASH and SUN domain-containing protein. The SUN2:SYNE1/KASH1 LINC complex is a heterohexamer; the homotrimeric cloverleave-like conformation of the SUN domain is a prerequisite for LINC complex formation in which three separate SYNE1/KASH1 peptides bind at the interface of adjacent SUN domains. Self-associates. Interacts with SYNE3. Interacts with SPAG4/SUN4. May interact with MUSK. Interacts with F-actin via its N-terminal domain. Interacts with EMD and LMNA in vitro. Interacts (via KASH domain) with TMEM258. Post-translationally, the disulfid bond with SUN1 or SUN2 is required for stability of the respective LINC complex under tensile forces. Expressed in HeLa, A431, A172 and HaCaT cells (at protein level). Widely expressed. Highly expressed in skeletal and smooth muscles, heart, spleen, peripheral blood leukocytes, pancreas, cerebellum, stomach, kidney and placenta. Isoform GSRP-56 is predominantly expressed in heart and skeletal muscle (at protein level).

It localises to the nucleus outer membrane. Its subcellular location is the nucleus. The protein resides in the nucleus envelope. It is found in the cytoplasm. The protein localises to the cytoskeleton. It localises to the myofibril. Its subcellular location is the sarcomere. The protein resides in the golgi apparatus. Its function is as follows. Multi-isomeric modular protein which forms a linking network between organelles and the actin cytoskeleton to maintain the subcellular spatial organization. As a component of the LINC (LInker of Nucleoskeleton and Cytoskeleton) complex involved in the connection between the nuclear lamina and the cytoskeleton. The nucleocytoplasmic interactions established by the LINC complex play an important role in the transmission of mechanical forces across the nuclear envelope and in nuclear movement and positioning. May be involved in nucleus-centrosome attachment and nuclear migration in neural progenitors implicating LINC complex association with SUN1/2 and probably association with cytoplasmic dynein-dynactin motor complexes; SYNE1 and SYNE2 may act redundantly. Required for centrosome migration to the apical cell surface during early ciliogenesis. May be involved in nuclear remodeling during sperm head formation in spermatogenesis; a probable SUN3:SYNE1/KASH1 LINC complex may tether spermatid nuclei to posterior cytoskeletal structures such as the manchette. This Homo sapiens (Human) protein is Nesprin-1.